The following is a 254-amino-acid chain: Cdc42 effector protein 3 (254 aa).

The 15-residue stretch at Ile31–Gly45 folds into the CRIB domain. Position 63 is a phosphotyrosine (Tyr63). Ser89, Ser108, and Ser144 each carry phosphoserine. The interval Val165–Phe205 is disordered. The span at Ser171 to Ser197 shows a compositional bias: low complexity.

This sequence belongs to the BORG/CEP family. As to quaternary structure, interacts with RHOQ and CDC42, in a GTP-dependent manner, and with SEPT7.

The protein resides in the endomembrane system. It localises to the cytoplasm. It is found in the cytoskeleton. Its function is as follows. Probably involved in the organization of the actin cytoskeleton. May act downstream of CDC42 to induce actin filament assembly leading to cell shape changes. Induces pseudopodia formation in fibroblasts. This chain is Cdc42 effector protein 3 (Cdc42ep3), found in Mus musculus (Mouse).